The chain runs to 40 residues: Photosystem II reaction center protein J (40 aa).

The helical transmembrane segment at 8–28 (IPLWVVATIAGLGVITVVGIF) threads the bilayer.

It belongs to the PsbJ family. In terms of assembly, PSII is composed of 1 copy each of membrane proteins PsbA, PsbB, PsbC, PsbD, PsbE, PsbF, PsbH, PsbI, PsbJ, PsbK, PsbL, PsbM, PsbT, PsbX, PsbY, PsbZ, Psb30/Ycf12, peripheral proteins PsbO, CyanoQ (PsbQ), PsbU, PsbV and a large number of cofactors. It forms dimeric complexes.

Its subcellular location is the cellular thylakoid membrane. Functionally, one of the components of the core complex of photosystem II (PSII). PSII is a light-driven water:plastoquinone oxidoreductase that uses light energy to abstract electrons from H(2)O, generating O(2) and a proton gradient subsequently used for ATP formation. It consists of a core antenna complex that captures photons, and an electron transfer chain that converts photonic excitation into a charge separation. This chain is Photosystem II reaction center protein J, found in Trichormus variabilis (strain ATCC 29413 / PCC 7937) (Anabaena variabilis).